The primary structure comprises 603 residues: Elongation factor 4 (603 aa).

A tr-type G domain is found at 7–191; that stretch reads DNIRNFSIVA…AIVTRLPPPQ (185 aa). Residues 19–24 and 138–141 contribute to the GTP site; these read DHGKST and NKVD.

It belongs to the TRAFAC class translation factor GTPase superfamily. Classic translation factor GTPase family. LepA subfamily.

Its subcellular location is the cell inner membrane. The catalysed reaction is GTP + H2O = GDP + phosphate + H(+). Its function is as follows. Required for accurate and efficient protein synthesis under certain stress conditions. May act as a fidelity factor of the translation reaction, by catalyzing a one-codon backward translocation of tRNAs on improperly translocated ribosomes. Back-translocation proceeds from a post-translocation (POST) complex to a pre-translocation (PRE) complex, thus giving elongation factor G a second chance to translocate the tRNAs correctly. Binds to ribosomes in a GTP-dependent manner. In Rhodopseudomonas palustris (strain HaA2), this protein is Elongation factor 4.